The primary structure comprises 142 residues: Hemoglobin subunit alpha-A (142 aa).

Residues 2–142 form the Globin domain; the sequence is VLSANDKSNV…VGTVLTAKYR (141 aa). O2 is bound at residue His-59. His-88 lines the heme b pocket.

Belongs to the globin family. As to quaternary structure, heterotetramer of two alpha chains and two beta chains. As to expression, red blood cells.

Functionally, involved in oxygen transport from the lung to the various peripheral tissues. This Columba livia (Rock dove) protein is Hemoglobin subunit alpha-A (HBAA).